The chain runs to 39 residues: Photosystem II reaction center protein L (39 aa).

The helical transmembrane segment at 18–38 threads the bilayer; the sequence is SLYLGLLSVFVLGILFSSYFF.

The protein belongs to the PsbL family. In terms of assembly, PSII is composed of 1 copy each of membrane proteins PsbA, PsbB, PsbC, PsbD, PsbE, PsbF, PsbH, PsbI, PsbJ, PsbK, PsbL, PsbM, PsbT, PsbX, PsbY, Psb30/Ycf12, peripheral proteins PsbO, CyanoQ (PsbQ), PsbU, PsbV and a large number of cofactors. It forms dimeric complexes.

It is found in the cellular thylakoid membrane. Functionally, one of the components of the core complex of photosystem II (PSII). PSII is a light-driven water:plastoquinone oxidoreductase that uses light energy to abstract electrons from H(2)O, generating O(2) and a proton gradient subsequently used for ATP formation. It consists of a core antenna complex that captures photons, and an electron transfer chain that converts photonic excitation into a charge separation. This subunit is found at the monomer-monomer interface and is required for correct PSII assembly and/or dimerization. This Prochlorococcus marinus (strain MIT 9301) protein is Photosystem II reaction center protein L.